Reading from the N-terminus, the 119-residue chain is Small ribosomal subunit protein bS6 (119 aa).

The interval 99–119 (KKEKKQSRKEEGSENSEKVEE) is disordered.

This sequence belongs to the bacterial ribosomal protein bS6 family.

Binds together with bS18 to 16S ribosomal RNA. In Thermosipho melanesiensis (strain DSM 12029 / CIP 104789 / BI429), this protein is Small ribosomal subunit protein bS6.